We begin with the raw amino-acid sequence, 58 residues long: UPF0391 membrane protein Sbal_1421 (58 aa).

2 helical membrane-spanning segments follow: residues 6 to 26 and 28 to 48; these read LVFL…IAGA and AGIA…SLLV.

This sequence belongs to the UPF0391 family.

The protein resides in the cell membrane. The protein is UPF0391 membrane protein Sbal_1421 of Shewanella baltica (strain OS155 / ATCC BAA-1091).